We begin with the raw amino-acid sequence, 251 residues long: Urease accessory protein UreF (251 aa).

The interval 1–20 (MAPAPDPAPAGSAAPDPASA) is disordered. Positions 9–20 (PAGSAAPDPASA) are enriched in low complexity.

The protein belongs to the UreF family. In terms of assembly, ureD, UreF and UreG form a complex that acts as a GTP-hydrolysis-dependent molecular chaperone, activating the urease apoprotein by helping to assemble the nickel containing metallocenter of UreC. The UreE protein probably delivers the nickel.

It is found in the cytoplasm. In terms of biological role, required for maturation of urease via the functional incorporation of the urease nickel metallocenter. The protein is Urease accessory protein UreF of Paracidovorax citrulli (strain AAC00-1) (Acidovorax citrulli).